Consider the following 3414-residue polypeptide: MVKKAILKGKGGGPPRRVSKETATKTRQPRVQMPNGLVLMRMMGILWHAVAGTARNPVLKAFWNSVPLKQATAALRKIKRTVSALMVGLQKRGKRRSATDWMSWLLVITLLGMTLAATVRKERDGSTVIRAEGKDAATQVRVENGTCVILATDMGSWCDDSLSYECVTIDQGEEPVDVDCFCRNVDGVYLEYGRCGKQEGSRTRRSVLIPSHAQGELTGRGHKWLEGDSLRTHLTRVEGWVWKNKLLALAMVTVVWLTLESVVTRVAVLVVLLCLAPVYASRCTHLENRDFVTGTQGTTRVTLVLELGGCVTITAEGKPSMDVWLDAIYQENPAKTREYCLHAKLSDTKVAARCPTMGPATLAEEHQGGTVCKRDQSDRGWGNHCGLFGKGSIVACVKAACEAKKKATGHVYDANKIVYTVKVEPHTGDYVAANETHSGRKTASFTISSEKTILTMGEYGDVSLLCRVASGVDLAQTVILELDKTVEHLPTAWQVHRDWFNDLALPWKHEGAQNWNNAERLVEFGAPHAVKMDVYNLGDQTGVLLKALAGVPVAHIEGTKYHLKSGHVTCEVGLEKLKMKGLTYTMCDKTKFTWKRAPTDSGHDTVVMEVTFSGTKPCRIPVRAVAHGSPDVNVAMLITPNPTIENNGGGFIEMQLPPGDNIIYVGELSHQWFQKGSSIGRVFQKTKKGIERLTVIGEHAWDFGSAGGFLSSIGKAVHTVLGGAFNSIFGGVGFLPKLLLGVALAWLGLNMRNPTMSMSFLLAGGLVLAMTLGVGADVGCAVDTERMELRCGEGLVVWREVSEWYDNYAYYPETPGALASAIKETFEEGSCGVVPQNRLEMAMWRSSVTELNLALAEGEANLTVVVDKFDPTDYRGGVPGLLKKGKDIKVSWKSWGHSMIWSIPEAPRRFMVGTEGQSECPLERRKTGVFTVAEFGVGLRTKVFLDFRQEPTHECDTGVMGAAVKNGMAIHTDQSLWMRSMKNDTGTYIVELLVTDLRNCSWPASHTIDNADVVDSELFLPASLAGPRSWYNRIPGYSEQVKGPWKYTPIRVIREECPGTTVTINAKCDKRGASVRSTTESGKVIPEWCCRACTMPPVTFRTGTDCWYAMEIRPVHDQGGLVRSMVVADNGELLSEGGVPGIVALFVVLEYIIRRRPSTGTTVVWGGIVVLALLVTGMVRIESLVRYVVAVGITFHLELGPEIVALMLLQAVFELRVGLLSAFALRRSLTVREMVTTYFLLLVLELGLPGASLEEFWKWGDALAMGALIFRACTAEGKTGAGLLLMALMTQQDVVTVHHGLVCFLSVASACSVWRLLKGHREQKGLTWVVPLAGLLGGEGSGIRLLAFWELSAHRGRRSFSEPLTVVGVMLTLASGMMRHTSQEALCALAVASFLLLMLVLGTRKMQLVAEWSGCVEWYPELVNEGGEVSLRVRQDAMGNFHLTELEKEERMMAFWLIAGLAASAIHWSGILGVMGLWTLTEMLRSSRRSDLVFSGQGGRERGDRPFEVKDGVYRIFSPGLFWGQNQVGVGYGSKGVLHTMWHVTRGAALSIDDAVAGPYWADVREDVVCYGGAWSLEEKWKGETVQVHAFPPGRAHEVHQCQPGELILDTGRKLGAIPIDLVKGTSGSPILNAQGVVVGLYGNGLKTNETYVSSIAQGEAEKSRPNLPQAVVGTGWTSKGQITVLDMHPGSGKTHRVLPELIRQCIDRRLRTLVLAPTRVVLKEMERALNGKRVRFHSPAVSDQQAGGAIVDVMCHATYVNRRLLPQGRQNWEVAIMDEAHWTDPHSIAARGHLYTLAKENKCALVLMTATPPGKSEPFPESNGAITSEERQIPDGEWRDGFDWITEYEGRTAWFVPSIAKGGAIARTLRQKGKSVICLNSKTFEKDYSRVRDEKPDFVVTTDISEMGANLDVSRVIDGRTNIKPEEVDGKVELTGTRRVTTASAAQRRGRVGRQDGRTDEYIYSGQCDDDDSGLVQWKEAQILLDNITTLRGPVATFYGPEQDKMPEVAGHFRLTEEKRKHFRHLLTHCDFTPWLAWHVAANVSSVTDRSWTWEGPEANAVDEASGDLVTFRSPNGAERTLRPVWKDARMFKEGRDIKEFVAYASGRRSFGDVLTGMSGVPELLRHRCVSALDVFYTLMHEEPGSRAMRMAERDAPEAFLTMVEMMVLGLATLGVIWCFVVRTSISRMMLGTLVLLASLLLLWAGGVGYGNMAGVALIFYTLLTVLQPEAGKQRSSDDNKLAYFLLTLCSLAGLVAANEMGFLEKTKADLSTALWSEREEPRPWSEWTNVDIQPARSWGTYVLVVSLFTPYIIHQLQTKIQQLVNSAVASGAQAMRDLGGGAPFFGVAGHVMTLGVVSLIGATPTSLMVGVGLAALHLAIVVSGLEAELTQRAHKVFFSAMVRNPMVDGDVINPFGEGEAKPALYERKMSLVLATVLCLMSVVMNRTVASITEASAVGLAAAGQLLRPEADTLWTMPVACGMSGVVRGSLWGFLPLGHRLWLRASGGRRGGSEGDTLGDLWKRRLNNCTREEFFVYRRTGILETERDKARELLRRGETNVGLAVSRGTAKLAWLEERGYATLKGEVVDLGCGRGGWSYYAASRPAVMSVRAYTIGGKGHEAPKMVTSLGWNLIKFRSGMDVFSMQPHRADTVMCDIGESSPDAAVEGERTRKVILLMEQWKNRNPTAACVFKVLAPYRPEVIEALHRFQLQWGGGLVRTPFSRNSTHEMYYSTAVTGNIVNSVNVQSRKLLARFGDQRGPTKVPELDLGVGTRCVVLAEDKVKEQDVQERIRALREQYSETWHMDEEHPYRTWQYWGSYRTAPTGSAASLINGVVKLLSWPWNAREDVVRMAMTDTTAFGQQRVFKDKVDTKAQEPQPGTRVIMRAVNDWILERLAQKSKPRMCSREEFIAKVKSNAALGAWSDEQNRWASAREAVEDPAFWRLVDEERERHLMGRCAHCVYNMMGKREKKLGEFGVAKGSRAIWYMWLGSRFLEFEALGFLNEDHWASRESSGAGVEGISLNYLGWHLKKLSTLNGGLFYADDTAGWDTKVTNADLEDEEQILRYMEGEHKQLATTIMQKAYHAKVVKVARPSRDGGCIMDVITRRDQRGSGQVVTYALNTLTNIKVQLIRMMEGEGVIEAADAHNPRLLRVERWLKEHGEERLGRMLVSGDDCVVRPLDDRFGKALYFLNDMAKTRKDIGEWEHSAGFSSWEEVPFCSHHFHELVMKDGRTLVVPCRDQDELVGRARISPGCGWSVRETACLSKAYGQMWLLSYFHRRDLRTLGLAINSAVPADWVPTGRTTWSIHASGAWMTTEDMLDVWNRVWILDNPFMQNKERVMEWRDVPYLPKAQDMLCSSLVGRRERAEWAKNIWGAVEKVRKMIGPEKFKDYLSCMDRHDLHWELRLESSII.

Positions 1-30 (MVKKAILKGKGGGPPRRVSKETATKTRQPR) are disordered. Residues 2–98 (VKKAILKGKG…LQKRGKRRSA (97 aa)) are Cytoplasmic-facing. The propeptide at 97–117 (SATDWMSWLLVITLLGMTLAA) is ER anchor for the capsid protein C, removed in mature form by serine protease NS3. The chain crosses the membrane as a helical span at residues 99–119 (TDWMSWLLVITLLGMTLAATV). At 120-242 (RKERDGSTVI…HLTRVEGWVW (123 aa)) the chain is on the extracellular side. Asparagine 144 carries an N-linked (GlcNAc...) asparagine; by host glycan. The helical transmembrane segment at 243 to 260 (KNKLLALAMVTVVWLTLE) threads the bilayer. Residue serine 261 is a topological domain, cytoplasmic. A helical transmembrane segment spans residues 262-280 (VVTRVAVLVVLLCLAPVYA). Topologically, residues 281–727 (SRCTHLENRD…HTVLGGAFNS (447 aa)) are extracellular. Cystine bridges form between cysteine 283-cysteine 310, cysteine 340-cysteine 396, cysteine 340-cysteine 401, cysteine 354-cysteine 385, cysteine 372-cysteine 396, and cysteine 372-cysteine 401. The segment at 378–391 (DRGWGNHCGLFGKG) is fusion peptide. A glycan (N-linked (GlcNAc...) asparagine; by host) is linked at asparagine 434. 2 disulfides stabilise this stretch: cysteine 466–cysteine 570 and cysteine 587–cysteine 618. Residues 728 to 748 (IFGGVGFLPKLLLGVALAWLG) traverse the membrane as a helical segment. At 749-755 (LNMRNPT) the chain is on the extracellular side. The chain crosses the membrane as a helical span at residues 756 to 776 (MSMSFLLAGGLVLAMTLGVGA). Topologically, residues 777–1132 (DVGCAVDTER…RSMVVADNGE (356 aa)) are extracellular. 6 cysteine pairs are disulfide-bonded: cysteine 780–cysteine 791, cysteine 831–cysteine 920, cysteine 955–cysteine 1000, cysteine 1057–cysteine 1106, cysteine 1068–cysteine 1090, and cysteine 1089–cysteine 1093. N-linked (GlcNAc...) asparagine; by host glycosylation is found at asparagine 861, asparagine 983, and asparagine 999. A helical membrane pass occupies residues 1133–1153 (LLSEGGVPGIVALFVVLEYII). Residues 1154–1158 (RRRPS) lie on the Cytoplasmic side of the membrane. A helical membrane pass occupies residues 1159–1179 (TGTTVVWGGIVVLALLVTGMV). Over 1180 to 1187 (RIESLVRY) the chain is Lumenal. The helical transmembrane segment at 1188-1208 (VVAVGITFHLELGPEIVALML) threads the bilayer. Residues 1209-1293 (LQAVFELRVG…LLMALMTQQD (85 aa)) lie on the Cytoplasmic side of the membrane. A helical transmembrane segment spans residues 1294–1314 (VVTVHHGLVCFLSVASACSVW). Over 1315–1327 (RLLKGHREQKGLT) the chain is Lumenal. The chain crosses the membrane as a helical span at residues 1328–1348 (WVVPLAGLLGGEGSGIRLLAF). Topologically, residues 1349 to 1359 (WELSAHRGRRS) are cytoplasmic. Residues 1360-1378 (FSEPLTVVGVMLTLASGMM) traverse the membrane as a helical segment. At 1379–1382 (RHTS) the chain is on the lumenal side. Residues 1383–1403 (QEALCALAVASFLLLMLVLGT) form a helical membrane-spanning segment. Over 1404–1454 (RKMQLVAEWSGCVEWYPELVNEGGEVSLRVRQDAMGNFHLTELEKEERMMA) the chain is Cytoplasmic. The tract at residues 1410 to 1449 (AEWSGCVEWYPELVNEGGEVSLRVRQDAMGNFHLTELEKE) is interacts with and activates NS3 protease. An intramembrane region (helical) is located at residues 1455–1475 (FWLIAGLAASAIHWSGILGVM). Topologically, residues 1476–2160 (GLWTLTEMLR…RMAERDAPEA (685 aa)) are cytoplasmic. One can recognise a Peptidase S7 domain in the interval 1490–1669 (SDLVFSGQGG…EAEKSRPNLP (180 aa)). Residues histidine 1543, aspartate 1567, and serine 1627 each act as charge relay system; for serine protease NS3 activity in the active site. The 157-residue stretch at 1675 to 1831 (TGWTSKGQIT…ESNGAITSEE (157 aa)) folds into the Helicase ATP-binding domain. 1688–1695 (MHPGSGKT) lines the ATP pocket. Positions 1779–1782 (DEAH) match the DEAH box motif. Residues 1841-2000 (DGFDWITEYE…TLRGPVATFY (160 aa)) enclose the Helicase C-terminal domain. Lysine 1883 is modified (N6-acetyllysine; by host). A helical transmembrane segment spans residues 2161–2181 (FLTMVEMMVLGLATLGVIWCF). Over 2182–2189 (VVRTSISR) the chain is Lumenal. Positions 2190 to 2210 (MMLGTLVLLASLLLLWAGGVG) form an intramembrane region, helical. A topological domain (lumenal) is located at residue tyrosine 2211. The helical transmembrane segment at 2212–2232 (GNMAGVALIFYTLLTVLQPEA) threads the bilayer. The Cytoplasmic segment spans residues 2233-2244 (GKQRSSDDNKLA). Residues 2245–2265 (YFLLTLCSLAGLVAANEMGFL) traverse the membrane as a helical segment. Residues 2266 to 2299 (EKTKADLSTALWSEREEPRPWSEWTNVDIQPARS) are Lumenal-facing. Residues 2300-2320 (WGTYVLVVSLFTPYIIHQLQT) constitute an intramembrane region (helical). At 2321 to 2343 (KIQQLVNSAVASGAQAMRDLGGG) the chain is on the lumenal side. The helical intramembrane region spans 2344 to 2364 (APFFGVAGHVMTLGVVSLIGA). Over 2365–2368 (TPTS) the chain is Lumenal. The helical transmembrane segment at 2369-2389 (LMVGVGLAALHLAIVVSGLEA) threads the bilayer. Over 2390–2432 (ELTQRAHKVFFSAMVRNPMVDGDVINPFGEGEAKPALYERKMS) the chain is Cytoplasmic. Residues 2433–2453 (LVLATVLCLMSVVMNRTVASI) traverse the membrane as a helical segment. Residues 2454 to 2477 (TEASAVGLAAAGQLLRPEADTLWT) are Lumenal-facing. A helical transmembrane segment spans residues 2478–2498 (MPVACGMSGVVRGSLWGFLPL). Over 2499–3414 (GHRLWLRASG…WELRLESSII (916 aa)) the chain is Cytoplasmic. The region spanning 2512–2776 (GGSEGDTLGD…ELDLGVGTRC (265 aa)) is the mRNA cap 0-1 NS5-type MT domain. Position 2567 (serine 2567) interacts with S-adenosyl-L-methionine. Serine 2567 carries the post-translational modification Phosphoserine. Residue lysine 2572 is the For 2'-O-MTase activity of the active site. S-adenosyl-L-methionine is bound by residues glycine 2597, tryptophan 2598, threonine 2615, isoleucine 2616, aspartate 2642, and valine 2643. Catalysis depends on aspartate 2657, which acts as the For 2'-O-MTase activity. Isoleucine 2658 contributes to the S-adenosyl-L-methionine binding site. Active-site for 2'-O-MTase activity residues include lysine 2694 and glutamate 2730. Residues 2730 to 2734 (EMYYS) are interaction with host SCRIB. Tyrosine 2732 contacts S-adenosyl-L-methionine. Residues glutamate 2950, histidine 2954, cysteine 2959, and cysteine 2962 each coordinate Zn(2+). One can recognise a RdRp catalytic domain in the interval 3040 to 3189 (GLFYADDTAG…RPLDDRFGKA (150 aa)). The Zn(2+) site is built by histidine 3224, cysteine 3240, and cysteine 3359.

The protein in the N-terminal section; belongs to the class I-like SAM-binding methyltransferase superfamily. mRNA cap 0-1 NS5-type methyltransferase family. Homodimer. Interacts (via N-terminus) with host EXOC1 (via C-terminus); this interaction results in EXOC1 degradation through the proteasome degradation pathway. As to quaternary structure, forms heterodimers with envelope protein E in the endoplasmic reticulum and Golgi. In terms of assembly, homodimer; in the endoplasmic reticulum and Golgi. Interacts with protein prM. Interacts with non-structural protein 1. Homodimer; Homohexamer when secreted. Interacts with envelope protein E. As to quaternary structure, interacts (via N-terminus) with serine protease NS3. In terms of assembly, forms a heterodimer with serine protease NS3. May form homooligomers. Forms a heterodimer with NS2B. Interacts with NS4B. Interacts with unphosphorylated RNA-directed RNA polymerase NS5; this interaction stimulates RNA-directed RNA polymerase NS5 guanylyltransferase activity. As to quaternary structure, interacts with serine protease NS3. Interacts with NS1. In terms of assembly, homodimer. Interacts with host STAT2; this interaction inhibits the phosphorylation of the latter, and, when all viral proteins are present (polyprotein), targets STAT2 for degradation. Interacts with serine protease NS3. Interacts with host SCRIB; this interaction targets NS5 to the cell membrane periphery and nucleus, thereby allowing efficient host nuclear STAT1 inhibition. Specific enzymatic cleavages in vivo yield mature proteins. Cleavages in the lumen of endoplasmic reticulum are performed by host signal peptidase, whereas cleavages in the cytoplasmic side are performed by serine protease NS3. Signal cleavage at the 2K-4B site requires a prior NS3 protease-mediated cleavage at the 4A-2K site. In terms of processing, cleaved in post-Golgi vesicles by a host furin, releasing the mature small envelope protein M, and peptide pr. This cleavage is incomplete as up to 30% of viral particles still carry uncleaved prM. Post-translationally, N-glycosylated. N-glycosylated. The excreted form is glycosylated and this is required for efficient secretion of the protein from infected cells. In terms of processing, acetylated by host KAT5. Acetylation modulates NS3 RNA-binding and unwinding activities and plays an important positive role for viral replication. Post-translationally, phosphorylated on serines residues. This phosphorylation may trigger NS5 nuclear localization.

It localises to the virion. The protein resides in the host nucleus. The protein localises to the host cytoplasm. It is found in the host perinuclear region. Its subcellular location is the secreted. It localises to the virion membrane. The protein resides in the host endoplasmic reticulum membrane. The enzyme catalyses Selective hydrolysis of -Xaa-Xaa-|-Yaa- bonds in which each of the Xaa can be either Arg or Lys and Yaa can be either Ser or Ala.. It catalyses the reaction RNA(n) + a ribonucleoside 5'-triphosphate = RNA(n+1) + diphosphate. It carries out the reaction a ribonucleoside 5'-triphosphate + H2O = a ribonucleoside 5'-diphosphate + phosphate + H(+). The catalysed reaction is ATP + H2O = ADP + phosphate + H(+). The enzyme catalyses a 5'-end (5'-triphosphoguanosine)-ribonucleoside in mRNA + S-adenosyl-L-methionine = a 5'-end (N(7)-methyl 5'-triphosphoguanosine)-ribonucleoside in mRNA + S-adenosyl-L-homocysteine. It catalyses the reaction a 5'-end (N(7)-methyl 5'-triphosphoguanosine)-ribonucleoside in mRNA + S-adenosyl-L-methionine = a 5'-end (N(7)-methyl 5'-triphosphoguanosine)-(2'-O-methyl-ribonucleoside) in mRNA + S-adenosyl-L-homocysteine + H(+). In terms of biological role, plays a role in virus budding by binding to the cell membrane and gathering the viral RNA into a nucleocapsid that forms the core of a mature virus particle. During virus entry, may induce genome penetration into the host cytoplasm after hemifusion induced by the surface proteins. Can migrate to the cell nucleus where it modulates host functions. Functionally, inhibits RNA silencing by interfering with host Dicer. Prevents premature fusion activity of envelope proteins in trans-Golgi by binding to envelope protein E at pH6.0. After virion release in extracellular space, gets dissociated from E dimers. Its function is as follows. Acts as a chaperone for envelope protein E during intracellular virion assembly by masking and inactivating envelope protein E fusion peptide. prM is the only viral peptide matured by host furin in the trans-Golgi network probably to avoid catastrophic activation of the viral fusion activity in acidic Golgi compartment prior to virion release. prM-E cleavage is inefficient, and many virions are only partially matured. These uncleaved prM would play a role in immune evasion. In terms of biological role, may play a role in virus budding. Exerts cytotoxic effects by activating a mitochondrial apoptotic pathway through M ectodomain. May display a viroporin activity. Functionally, binds to host cell surface receptor and mediates fusion between viral and cellular membranes. Envelope protein is synthesized in the endoplasmic reticulum in the form of heterodimer with protein prM. They play a role in virion budding in the ER, and the newly formed immature particle is covered with 60 spikes composed of heterodimer between precursor prM and envelope protein E. The virion is transported to the Golgi apparatus where the low pH causes dissociation of PrM-E heterodimers and formation of E homodimers. prM-E cleavage is inefficient, and many virions are only partially matured. These uncleaved prM would play a role in immune evasion. Involved in immune evasion, pathogenesis and viral replication. Once cleaved off the polyprotein, is targeted to three destinations: the viral replication cycle, the plasma membrane and the extracellular compartment. Essential for viral replication. Required for formation of the replication complex and recruitment of other non-structural proteins to the ER-derived membrane structures. Excreted as a hexameric lipoparticle that plays a role against host immune response. Antagonizing the complement function. Binds to the host macrophages and dendritic cells. Inhibits signal transduction originating from Toll-like receptor 3 (TLR3). Its function is as follows. Component of the viral RNA replication complex that functions in virion assembly and antagonizes the host immune response. In terms of biological role, required cofactor for the serine protease function of NS3. May have membrane-destabilizing activity and form viroporins. Functionally, displays three enzymatic activities: serine protease, NTPase and RNA helicase. NS3 serine protease, in association with NS2B, performs its autocleavage and cleaves the polyprotein at dibasic sites in the cytoplasm: C-prM, NS2A-NS2B, NS2B-NS3, NS3-NS4A, NS4A-2K and NS4B-NS5. NS3 RNA helicase binds RNA and unwinds dsRNA in the 3' to 5' direction. Regulates the ATPase activity of the NS3 helicase activity. NS4A allows NS3 helicase to conserve energy during unwinding. Its function is as follows. Functions as a signal peptide for NS4B and is required for the interferon antagonism activity of the latter. In terms of biological role, induces the formation of ER-derived membrane vesicles where the viral replication takes place. Inhibits interferon (IFN)-induced host STAT1 phosphorylation and nuclear translocation, thereby preventing the establishment of cellular antiviral state by blocking the IFN-alpha/beta pathway. Inhibits STAT2 translocation in the nucleus after IFN-alpha treatment. Functionally, replicates the viral (+) and (-) genome, and performs the capping of genomes in the cytoplasm. NS5 methylates viral RNA cap at guanine N-7 and ribose 2'-O positions. Besides its role in RNA genome replication, also prevents the establishment of cellular antiviral state by blocking the interferon-alpha/beta (IFN-alpha/beta) signaling pathway. Inhibits host TYK2 and STAT2 phosphorylation, thereby preventing activation of JAK-STAT signaling pathway. The chain is Genome polyprotein from Tick-borne encephalitis virus European subtype (strain Neudoerfl) (NEUV).